A 488-amino-acid chain; its full sequence is Transmembrane protein 39A (488 aa).

N-linked (GlcNAc...) asparagine glycosylation is found at asparagine 31 and asparagine 39. 8 helical membrane-spanning segments follow: residues 72–92 (SLLF…IQYI), 110–130 (TSLN…VMLA), 154–174 (VLIS…CWTL), 182–202 (SVLN…LCCF), 287–307 (EVLF…LCFV), 319–339 (CEHL…QLLP), 420–440 (LLNL…YSLL), and 446–466 (NHTL…FKLL).

The protein belongs to the TMEM39 family. As to quaternary structure, interacts with SACM1L, SEC23A and SEC24A. In terms of assembly, (Microbial infection) Interacts with encephalomyocarditis virus (EMCV) major capsid proteins VP1 and VP2. As to expression, up-regulated in brain tumor glioblastoma multiforme cells (at protein level).

The protein localises to the endoplasmic reticulum membrane. Regulates autophagy by controlling the spatial distribution and levels of the intracellular phosphatidylinositol 4-phosphate (PtdIns(4)P) pools. Modulates (PtdIns(4)P) levels by regulating the ER-to-Golgi trafficking of the phosphatidylinositide phosphatase SACM1L. Functionally, (Microbial infection) Positively regulates the replication of encephalomyocarditis virus (EMCV) via autophagy-dependent pathway. The protein is Transmembrane protein 39A (TMEM39A) of Homo sapiens (Human).